The primary structure comprises 285 residues: DegV domain-containing protein CA_C3284 (285 aa).

Residues 3 to 280 form the DegV domain; sequence VKILTDSTSC…PGAIGIAYYT (278 aa). S59 and S91 together coordinate hexadecanoate.

In terms of biological role, may bind long-chain fatty acids, such as palmitate, and may play a role in lipid transport or fatty acid metabolism. The chain is DegV domain-containing protein CA_C3284 from Clostridium acetobutylicum (strain ATCC 824 / DSM 792 / JCM 1419 / IAM 19013 / LMG 5710 / NBRC 13948 / NRRL B-527 / VKM B-1787 / 2291 / W).